The sequence spans 100 residues: Small ribosomal subunit protein uS14c (100 aa).

Belongs to the universal ribosomal protein uS14 family. As to quaternary structure, part of the 30S ribosomal subunit.

It is found in the plastid. The protein resides in the chloroplast. In terms of biological role, binds 16S rRNA, required for the assembly of 30S particles. This Thalassiosira pseudonana (Marine diatom) protein is Small ribosomal subunit protein uS14c.